A 284-amino-acid chain; its full sequence is Nucleoid occlusion protein (284 aa).

A DNA-binding region (H-T-H motif) is located at residues 143 to 162 (EALAQRVGKSQSAIANKMRL).

Belongs to the ParB family.

Its subcellular location is the cytoplasm. It localises to the nucleoid. In terms of biological role, effects nucleoid occlusion by binding relatively nonspecifically to DNA and preventing the assembly of the division machinery in the vicinity of the nucleoid, especially under conditions that disturb the cell cycle. It helps to coordinate cell division and chromosome segregation by preventing the formation of the Z ring through the nucleoid, which would cause chromosome breakage. The sequence is that of Nucleoid occlusion protein from Listeria monocytogenes serovar 1/2a (strain ATCC BAA-679 / EGD-e).